The sequence spans 95 residues: MRKYEIMYIIRPNMDDEARQALVERFNNVLKENGAEITNVTDWGKRRLAYEIQKYRDGYYMIVNVVSEPKAVQEFDRLARISEDIIRHIVVKEEE.

The protein belongs to the bacterial ribosomal protein bS6 family.

In terms of biological role, binds together with bS18 to 16S ribosomal RNA. The sequence is that of Small ribosomal subunit protein bS6 from Geobacillus kaustophilus (strain HTA426).